A 1310-amino-acid chain; its full sequence is Multidrug resistance protein 4 (1310 aa).

The next 5 helical transmembrane spans lie at 48-68 (WLDL…GVLT), 125-145 (MVCF…CFFV), 196-216 (KFGI…IGFA), 223-243 (LVIM…AVFA), and 299-319 (GLTV…AFSL). An ABC transmembrane type-1 1 domain is found at 55–368 (AVGIFGSIGC…IAIPLNIFAT (314 aa)). Asn-336 carries N-linked (GlcNAc...) asparagine glycosylation. Residues 342 to 362 (VMIVFICVLIATQGLSIIAIP) form a helical membrane-spanning segment. Asn-402 carries an N-linked (GlcNAc...) asparagine glycan. The ABC transporter 1 domain maps to 403–642 (ITLEDVQFRY…KGTYYGLVKR (240 aa)). Residue 438 to 445 (GASGCGKS) participates in ATP binding. Asn-608 carries N-linked (GlcNAc...) asparagine glycosylation. 2 consecutive transmembrane segments (helical) span residues 721-741 (WFLS…FPFF) and 773-793 (IIVV…IGLF). Positions 722-1030 (FLSTFGFIGG…LGNIVPDIGK (309 aa)) constitute an ABC transmembrane type-1 2 domain. Residue Asn-816 is glycosylated (N-linked (GlcNAc...) asparagine). 3 helical membrane passes run 849-869 (VGNV…AFYY), 871-891 (WKVS…VFIN), and 945-965 (IGIY…TLLT). The ABC transporter 2 domain occupies 1065-1304 (IEFKDICFRY…KGFYYTLAMQ (240 aa)). Residue 1100–1107 (GASGCGKS) participates in ATP binding.

Belongs to the ABC transporter superfamily. ABCB family. Multidrug resistance exporter (TC 3.A.1.201) subfamily.

Its subcellular location is the membrane. The enzyme catalyses ATP + H2O + xenobioticSide 1 = ADP + phosphate + xenobioticSide 2.. Energy-dependent efflux pump responsible for decreased drug accumulation in multidrug resistance parasites. The protein is Multidrug resistance protein 4 of Entamoeba histolytica (strain ATCC 30459 / HM-1:IMSS / ABRM).